An 859-amino-acid chain; its full sequence is Bifunctional uridylyltransferase/uridylyl-removing enzyme (859 aa).

A uridylyltransferase region spans residues Met1 to Leu325. Residues Ser326 to Leu682 are uridylyl-removing. The region spanning Val444 to Leu566 is the HD domain. ACT domains lie at Gln683 to Ser762 and Ile791 to Val859.

Belongs to the GlnD family. Mg(2+) serves as cofactor.

The catalysed reaction is [protein-PII]-L-tyrosine + UTP = [protein-PII]-uridylyl-L-tyrosine + diphosphate. It carries out the reaction [protein-PII]-uridylyl-L-tyrosine + H2O = [protein-PII]-L-tyrosine + UMP + H(+). With respect to regulation, uridylyltransferase (UTase) activity is inhibited by glutamine, while glutamine activates uridylyl-removing (UR) activity. In terms of biological role, modifies, by uridylylation and deuridylylation, the PII regulatory proteins (GlnB and homologs), in response to the nitrogen status of the cell that GlnD senses through the glutamine level. Under low glutamine levels, catalyzes the conversion of the PII proteins and UTP to PII-UMP and PPi, while under higher glutamine levels, GlnD hydrolyzes PII-UMP to PII and UMP (deuridylylation). Thus, controls uridylylation state and activity of the PII proteins, and plays an important role in the regulation of nitrogen fixation and metabolism. The protein is Bifunctional uridylyltransferase/uridylyl-removing enzyme of Burkholderia vietnamiensis (strain G4 / LMG 22486) (Burkholderia cepacia (strain R1808)).